The primary structure comprises 210 residues: Glycerol-3-phosphate acyltransferase (210 aa).

5 consecutive transmembrane segments (helical) span residues leucine 4–alanine 24, alanine 52–glycine 72, aspartate 82–phenylalanine 102, leucine 118–phenylalanine 138, and phenylalanine 159–tryptophan 179.

It belongs to the PlsY family. As to quaternary structure, probably interacts with PlsX.

It localises to the cell inner membrane. It catalyses the reaction an acyl phosphate + sn-glycerol 3-phosphate = a 1-acyl-sn-glycero-3-phosphate + phosphate. It functions in the pathway lipid metabolism; phospholipid metabolism. Its function is as follows. Catalyzes the transfer of an acyl group from acyl-phosphate (acyl-PO(4)) to glycerol-3-phosphate (G3P) to form lysophosphatidic acid (LPA). This enzyme utilizes acyl-phosphate as fatty acyl donor, but not acyl-CoA or acyl-ACP. This is Glycerol-3-phosphate acyltransferase from Paraburkholderia phymatum (strain DSM 17167 / CIP 108236 / LMG 21445 / STM815) (Burkholderia phymatum).